Here is a 1866-residue protein sequence, read N- to C-terminus: RNA1 polyprotein (1866 aa).

Residues 462 to 633 form the SF3 helicase domain; sequence LKGINDLEQL…KAYDAANFAS (172 aa). 494–501 serves as a coordination point for ATP; sequence GKSRTGKS. Residues 897 to 917 form a helical membrane-spanning segment; that stretch reads LVGSGNGPVLMGVAAGAFSAE. An O-(5'-phospho-RNA)-serine modification is found at S920. The Peptidase C3 domain occupies 945–1150; sequence DAQMSLDQSS…CASLLPPLEP (206 aa). Catalysis depends on for picornain 3C-like protease activity residues H987, E1023, and C1113. The region spanning 1429-1559 is the RdRp catalytic domain; sequence NDVLCCDYSS…SVNAVVTPYF (131 aa).

Specific enzymatic cleavages by picornain 3C-like protease in vivo yield mature proteins. Picornain 3C-like protease is autocatalytically processed. In terms of processing, uridylylated by the polymerase and is covalently linked to the 5'-end of genomic RNA. This uridylylated form acts as a nucleotide-peptide primer for the polymerase.

The protein resides in the host membrane. Its subcellular location is the host cytoplasm. It is found in the host perinuclear region. It localises to the host endoplasmic reticulum. It carries out the reaction RNA(n) + a ribonucleoside 5'-triphosphate = RNA(n+1) + diphosphate. Functionally, thiol protease that cleaves the RNA1 and RNA2 polyproteins. Plays a role in RNA replication. It is covalently linked to the 5'terminus of both viral single-stranded RNA1 and RNA2 molecules. In terms of biological role, down-regulates the RNA1 polyprotein processing and enhances trans-cleavage of RNA2 polyproteins. The protease cofactor and the putative helicase seem to target the replication complexes to ER membranes. Their physical association causes the membrane rearrangement of host ER that may result in formation of the small membranous vesicles that are the site of viral RNA synthesis. Its function is as follows. The protease cofactor and the putative helicase seem to target the replication complexes to ER membranes. Their physical association causes the membrane rearrangement of host ER that may result in formation of the small membranous vesicles that are the site of viral RNA synthesis. Functionally, replicates the viral genome. This chain is RNA1 polyprotein, found in Cajanus cajan (Pigeon pea).